We begin with the raw amino-acid sequence, 1411 residues long: MKDLLNLFNQQRQTLDFDAIKIGLASPALIRSWSFGEVKKPETINYRTFKPERDGLFCAAIFGPIKDYECLCGKYKRMKHRGVVCEKCGTEVTLAKVRRERMGCIELASPVAHIWFLKSLPSRIGLMLDMTLRDIERVLYFEAYVVTEPGLTPLERRQLLTEEQYLQARQEHADDFDASMGAEAVYELLRMIDLQSEMARLREEIVVTGSETKLKRLTKRIKLIEAFIESGNRPEWMILTVLPVLPPDLRPLVPLDGGRFATSDLNDLYRRVINRNNRLCRLLELSAPDIIVRNEKRMLQESVDALLDNGRRGRAITGTNKRPLKSLADMIKGKQGRFRQNLLGKRVDYSARSVIIVGPNLRLHQCGLPKKMALELFKPFVFAKLQRRGLATTIKGAKKLVEREEAEVWDILEEVIFEHPVVLNRAPTLHRQGIQAFEPVLIEGKAIQLHPLVCTAFNADFDGDQMAVHVPLSLEAQLEARALMMSTNNILSPANGEPIIVPSQDVVLGLYYMSRALENKKGEGMVFANTSELKRAYDNSVVELHAKVKVRITEIETDDQGLRNKASSIVDTTVGRALLSEILPEGLPFVLVNTEMTKKNISRLINSSYRMLGLKETVVFADKLMYTGYAYATRAGVSICIDDMLIPLEKKEILGEAEQEVLEIQEQYQSGLVTAGERYNKVVDIWSRTNERIAKAMMDTIGTEKVVNTDGEIVDQKSMNSLYIMADSGARGSPQQIRQLAAMRGLMVRPDGSIIETPIKANFREGLSVQEYFNSTHGARKGLADTALKTANSGYLTRRLVDVTQDLCVVQLDCGTAGGLTMTPIVEGGDVVEPLKDRVLGRVVAEDVLLPGNDDEPIVTRSTLLDEQWVAKLEEAGVQSVKVRSPITCESPFGVCALCYGRDLARGHLVNMGEAVGVIAAQSIGEPGTQLTMRTFHIGGTALSAAAIDNIAVKTSGSVKFTNLKYVEHANGTLVAVSRSGEISVLDTHGRERERYKLPYGATINVKDMAEVKSGQILANWDPHNHPIVSEVAGFVRFIDFVDGVTVIEKTDDLTGLSSREIADLKRRGSQGKDLRPLVRIVDKKGNDLTIPGTDLSAQYLLPPRSIVNLQDGAPVGIGDVVAKIPQEASKTRDITGGLPRVADLFEARRPKDPAILAERSGVISFGKDTKGKQRLIIKDADGSEHEELIPKYRQIIVFEGEHVTKGETIVDGEPSPQDILRLLGIEPLAAYLVKEIQDVYRLQGVKINDKHIEVITRQMLRKVEIVDQGNSKFLNGEQVERQRVIDENAKLIARNELPAKYNPVLLGITKASLATESFISAASFQETTRVLTEAAVRGTRDNLRGLKENVIVGRLIPAGTGQTYHSQRRYSSVGLTESEMETLVGRSTSSGTEITSPSKDAIPLGSKVGF.

Zn(2+) is bound by residues Cys70, Cys72, Cys85, and Cys88. The Mg(2+) site is built by Asp460, Asp462, and Asp464. Zn(2+)-binding residues include Cys814, Cys889, Cys896, and Cys899. Positions 1387 to 1399 are enriched in polar residues; the sequence is RSTSSGTEITSPS. The segment at 1387-1411 is disordered; the sequence is RSTSSGTEITSPSKDAIPLGSKVGF.

This sequence belongs to the RNA polymerase beta' chain family. In terms of assembly, the RNAP catalytic core consists of 2 alpha, 1 beta, 1 beta' and 1 omega subunit. When a sigma factor is associated with the core the holoenzyme is formed, which can initiate transcription. The cofactor is Mg(2+). It depends on Zn(2+) as a cofactor.

It catalyses the reaction RNA(n) + a ribonucleoside 5'-triphosphate = RNA(n+1) + diphosphate. Functionally, DNA-dependent RNA polymerase catalyzes the transcription of DNA into RNA using the four ribonucleoside triphosphates as substrates. This is DNA-directed RNA polymerase subunit beta' from Xylella fastidiosa (strain M12).